The following is a 253-amino-acid chain: Putative cysteine-rich repeat secretory protein 33 (253 aa).

A signal peptide spans Met1–Ser28. Gnk2-homologous domains follow at residues Glu34–Asp133 and Tyr141–Phe250.

This sequence belongs to the cysteine-rich repeat secretory protein family.

It is found in the secreted. This Arabidopsis thaliana (Mouse-ear cress) protein is Putative cysteine-rich repeat secretory protein 33 (CRRSP33).